Here is a 383-residue protein sequence, read N- to C-terminus: tRNA (guanine-N(7)-)-methyltransferase non-catalytic subunit wuho (383 aa).

5 WD repeats span residues 61–101 (NLEV…ALLL), 105–144 (ALARASSALAFAPDSSSVLVTDKTGDCYQYDCVEVEAPPK), 148–187 (GHLSIVYDIVWTPDLKHIITCDRDDKIRVTNYPATHDIHS), 191–231 (GHKE…EVLQ), and 289–329 (AGSW…QAES).

This sequence belongs to the WD repeat TRM82 family. As to quaternary structure, forms a heterodimer with the catalytic subunit Mettl1. Interacts with mei-P26 and weakly interacts with bgcn; required for the function or formation of the mei-P26-bgcn-bam-sxl complex. Interacts with nanos; may be involved in mei-P26-dependent derepression of the BMP signaling pathway. Interacts with Myc; the interaction may be mediated by mei-P26 and may be involved in the regulation of ribosome biogenesis. In terms of tissue distribution, in testis, it is present at high level in hub cells, a niche for germline stem cells of testis. Ubiquitously expressed in all testicular cells throughout spermatogenesis. Ubiquitously expressed in all germline and somatic cells of the ovary.

It localises to the nucleus. It is found in the cytoplasm. It participates in tRNA modification; N(7)-methylguanine-tRNA biosynthesis. Its function is as follows. Required for the Mettl1-dependent formation of N(7)-methylguanine at position 46 (m7G46) in tRNA. In the Mettl1-wuho methyltransferase complex, it is required to stabilize and induce conformational changes of the catalytic subunit. Required for binding of nanos mRNA and repression of translation by the mei-P26-bgcn-bam-sxl complex. May cooperate with mei-P26 and nanos to derepress the BMP signaling pathway. May cooperate with mei-P26 to suppress expression of a subset of microRNAs. May cooperate with mei-P26 to regulate bam expression levels in germline cells during gametogenesis. Required to promote mitosis to meiosis transition during gametogenesis. May regulate germline cell division in part by regulating ribosome biogenesis. This is tRNA (guanine-N(7)-)-methyltransferase non-catalytic subunit wuho from Drosophila mojavensis (Fruit fly).